A 72-amino-acid polypeptide reads, in one-letter code: Translation initiation factor IF-1 (72 aa).

One can recognise an S1-like domain in the interval 1-72; that stretch reads MSKDDVIEMQ…TRGRITWRAK (72 aa).

The protein belongs to the IF-1 family. As to quaternary structure, component of the 30S ribosomal translation pre-initiation complex which assembles on the 30S ribosome in the order IF-2 and IF-3, IF-1 and N-formylmethionyl-tRNA(fMet); mRNA recruitment can occur at any time during PIC assembly.

It is found in the cytoplasm. One of the essential components for the initiation of protein synthesis. Stabilizes the binding of IF-2 and IF-3 on the 30S subunit to which N-formylmethionyl-tRNA(fMet) subsequently binds. Helps modulate mRNA selection, yielding the 30S pre-initiation complex (PIC). Upon addition of the 50S ribosomal subunit IF-1, IF-2 and IF-3 are released leaving the mature 70S translation initiation complex. This chain is Translation initiation factor IF-1, found in Clostridium beijerinckii (strain ATCC 51743 / NCIMB 8052) (Clostridium acetobutylicum).